Here is a 153-residue protein sequence, read N- to C-terminus: Transcriptional repressor NrdR (153 aa).

Residues 3-34 (CPSCHHSGTRVLESRPVEEGRSIRRRRECEQC) fold into a zinc finger. An ATP-cone domain is found at 49 to 139 (LIVVKKEGTR…VYRQFKDINV (91 aa)).

The protein belongs to the NrdR family. It depends on Zn(2+) as a cofactor.

Functionally, negatively regulates transcription of bacterial ribonucleotide reductase nrd genes and operons by binding to NrdR-boxes. This Geobacillus kaustophilus (strain HTA426) protein is Transcriptional repressor NrdR.